Reading from the N-terminus, the 1037-residue chain is Probable inorganic carbon transporter subunit DabA 1 (1037 aa).

Residues Cys460, Asp462, His719, and Cys734 each contribute to the Zn(2+) site.

Belongs to the inorganic carbon transporter (TC 9.A.2) DabA family. In terms of assembly, forms a complex with DabB. The cofactor is Zn(2+).

Its subcellular location is the cell inner membrane. Part of an energy-coupled inorganic carbon pump. The sequence is that of Probable inorganic carbon transporter subunit DabA 1 from Nitrobacter winogradskyi (strain ATCC 25391 / DSM 10237 / CIP 104748 / NCIMB 11846 / Nb-255).